The chain runs to 304 residues: Cell surface-binding protein OPG105 (304 aa).

The Alpha-carbonic anhydrase domain maps to 1 to 235 (MPQQLSPINI…NDDTQVYYSG (235 aa)). Over 1-275 (MPQQLSPINI…YQKYIEGNKT (275 aa)) the chain is Virion surface. Residues 276 to 294 (FAIIAIVFVFILTAILFLM) form a helical membrane-spanning segment. The Intravirion segment spans residues 295 to 304 (SRRYSREKQN).

The protein belongs to the alpha-carbonic anhydrase family. In terms of assembly, homodimer; disulfide-linked. Apparently non-glycosylated.

The protein localises to the virion membrane. In terms of biological role, binds to chondroitin sulfate on the cell surface to provide virion attachment to target cell. In Vaccinia virus (strain Copenhagen) (VACV), this protein is Cell surface-binding protein OPG105 (OPG105).